A 574-amino-acid polypeptide reads, in one-letter code: Streptolysin O (574 aa).

The first 36 residues, 1–36, serve as a signal peptide directing secretion; that stretch reads MKDMSNKKIFKKYSRVAGLLTAALIVGNLVTANADS. Positions 37-52 are enriched in low complexity; the sequence is NKQNTANTETTTTNEQ. Disordered regions lie at residues 37 to 64 and 84 to 111; these read NKQN…TTEK and KEMP…HTEE. Basic and acidic residues predominate over residues 53–64; that stretch reads PKPESSELTTEK. 4 beta stranded membrane-spanning segments follow: residues 263 to 276, 283 to 292, 361 to 370, and 378 to 390; these read KSQI…NSKI, IDFKSISKGE, SNDVEAAFSA, and KTNG…LENS. A Conserved undecapeptide motif is present at residues 532 to 542; sequence ECTGLAWEWWR. Residues 564–565 carry the Cholesterol binding motif; that stretch reads TL.

The protein belongs to the cholesterol-dependent cytolysin family. Homooligomeric pore complex of 35 to 50 subunits; when inserted in the host membrane.

Its subcellular location is the secreted. It is found in the host cell membrane. A cholesterol-dependent toxin that causes cytolysis by forming pores in cholesterol containing host membranes. After binding to target membranes, the protein undergoes a major conformation change, leading to its insertion in the host membrane and formation of an oligomeric pore complex. Cholesterol is required for binding to host membranes, membrane insertion and pore formation; cholesterol binding is mediated by a Thr-Leu pair in the C-terminus. Can be reversibly inactivated by oxidation. This is Streptolysin O (slo) from Streptococcus canis.